The chain runs to 225 residues: NAD(P)H-quinone oxidoreductase subunit K, chloroplastic (225 aa).

Residues C43, C44, C108, and C139 each coordinate [4Fe-4S] cluster.

Belongs to the complex I 20 kDa subunit family. As to quaternary structure, NDH is composed of at least 16 different subunits, 5 of which are encoded in the nucleus. [4Fe-4S] cluster is required as a cofactor.

It localises to the plastid. The protein localises to the chloroplast thylakoid membrane. It carries out the reaction a plastoquinone + NADH + (n+1) H(+)(in) = a plastoquinol + NAD(+) + n H(+)(out). The catalysed reaction is a plastoquinone + NADPH + (n+1) H(+)(in) = a plastoquinol + NADP(+) + n H(+)(out). In terms of biological role, NDH shuttles electrons from NAD(P)H:plastoquinone, via FMN and iron-sulfur (Fe-S) centers, to quinones in the photosynthetic chain and possibly in a chloroplast respiratory chain. The immediate electron acceptor for the enzyme in this species is believed to be plastoquinone. Couples the redox reaction to proton translocation, and thus conserves the redox energy in a proton gradient. The polypeptide is NAD(P)H-quinone oxidoreductase subunit K, chloroplastic (Daucus carota (Wild carrot)).